A 213-amino-acid polypeptide reads, in one-letter code: Probable 26S proteasome regulatory subunit p27 (213 aa).

Positions 1-82 form a coiled coil; the sequence is MDEFKQLDLK…IKKVLEKVFS (82 aa). Positions 120 to 184 constitute a PDZ domain; sequence SKILGRVKPF…TLDVLLIRGY (65 aa).

Its subcellular location is the cytoplasm. It is found in the nucleus. In terms of biological role, acts as a chaperone during the assembly of the 26S proteasome, specifically of the base subcomplex of the 19S regulatory complex (RC). The polypeptide is Probable 26S proteasome regulatory subunit p27 (nas2) (Schizosaccharomyces pombe (strain 972 / ATCC 24843) (Fission yeast)).